The sequence spans 306 residues: Acyl transferase (306 aa).

Active-site charge relay system residues include Ser-117, Asp-214, and His-244.

This sequence belongs to the LuxD family.

It functions in the pathway lipid metabolism; fatty acid reduction for biolumincescence. In terms of biological role, acyl transferase is part of the fatty acid reductase system required for aldehyde biosynthesis; it produces fatty acids for the luminescent reaction. This Photobacterium phosphoreum protein is Acyl transferase.